Reading from the N-terminus, the 600-residue chain is KIF-binding protein (600 aa).

Residues lysine 384 to leucine 434 adopt a coiled-coil conformation.

It belongs to the KIF-binding protein family.

It localises to the cytoplasm. It is found in the cytoskeleton. The chain is KIF-binding protein from Drosophila melanogaster (Fruit fly).